A 546-amino-acid chain; its full sequence is Chaperonin GroEL 4 (546 aa).

Residues 30 to 33 (TLGP), lysine 51, 87 to 91 (DGTTT), glycine 415, and aspartate 496 each bind ATP.

Belongs to the chaperonin (HSP60) family. Forms a cylinder of 14 subunits composed of two heptameric rings stacked back-to-back. Interacts with the co-chaperonin GroES.

The protein localises to the cytoplasm. It carries out the reaction ATP + H2O + a folded polypeptide = ADP + phosphate + an unfolded polypeptide.. Together with its co-chaperonin GroES, plays an essential role in assisting protein folding. The GroEL-GroES system forms a nano-cage that allows encapsulation of the non-native substrate proteins and provides a physical environment optimized to promote and accelerate protein folding. In Bradyrhizobium sp. (strain BTAi1 / ATCC BAA-1182), this protein is Chaperonin GroEL 4.